A 20-amino-acid chain; its full sequence is Antiviral protein Y3 (20 aa).

This Pleurotus citrinopileatus (Golden oyster mushroom) protein is Antiviral protein Y3.